The primary structure comprises 189 residues: uncharacterized protein (189 aa).

This is an uncharacterized protein from Human adenovirus B serotype 7 (HAdV-7).